A 75-amino-acid polypeptide reads, in one-letter code: UPF0270 protein PFL_4336 (75 aa).

It belongs to the UPF0270 family.

This Pseudomonas fluorescens (strain ATCC BAA-477 / NRRL B-23932 / Pf-5) protein is UPF0270 protein PFL_4336.